A 347-amino-acid polypeptide reads, in one-letter code: UDP-3-O-acylglucosamine N-acyltransferase 1 (347 aa).

The active-site Proton acceptor is His-246.

Belongs to the transferase hexapeptide repeat family. LpxD subfamily. In terms of assembly, homotrimer.

The enzyme catalyses a UDP-3-O-[(3R)-3-hydroxyacyl]-alpha-D-glucosamine + a (3R)-hydroxyacyl-[ACP] = a UDP-2-N,3-O-bis[(3R)-3-hydroxyacyl]-alpha-D-glucosamine + holo-[ACP] + H(+). It functions in the pathway bacterial outer membrane biogenesis; LPS lipid A biosynthesis. Catalyzes the N-acylation of UDP-3-O-acylglucosamine using 3-hydroxyacyl-ACP as the acyl donor. Is involved in the biosynthesis of lipid A, a phosphorylated glycolipid that anchors the lipopolysaccharide to the outer membrane of the cell. In Francisella tularensis subsp. tularensis (strain SCHU S4 / Schu 4), this protein is UDP-3-O-acylglucosamine N-acyltransferase 1.